Reading from the N-terminus, the 436-residue chain is 3-ketoacyl-CoA thiolase (436 aa).

The active-site Acyl-thioester intermediate is cysteine 99. Catalysis depends on proton acceptor residues histidine 392 and cysteine 422.

The protein belongs to the thiolase-like superfamily. Thiolase family. Heterotetramer of two alpha chains (FadJ) and two beta chains (FadI).

The protein localises to the cytoplasm. The catalysed reaction is an acyl-CoA + acetyl-CoA = a 3-oxoacyl-CoA + CoA. The protein operates within lipid metabolism; fatty acid beta-oxidation. Its function is as follows. Catalyzes the final step of fatty acid oxidation in which acetyl-CoA is released and the CoA ester of a fatty acid two carbons shorter is formed. In Photorhabdus laumondii subsp. laumondii (strain DSM 15139 / CIP 105565 / TT01) (Photorhabdus luminescens subsp. laumondii), this protein is 3-ketoacyl-CoA thiolase.